The following is a 657-amino-acid chain: Probable potassium transport system protein Kup (657 aa).

Residues Met1–Val25 are disordered. Helical transmembrane passes span Val35–Ile55, Val77–Val97, Thr127–Ile147, Pro165–Val185, Leu196–Ile216, Phe234–Thr254, Trp275–Leu295, Trp315–Gly335, Ile365–Phe385, Ala394–Val414, Leu422–Ala442, and Leu447–Thr467.

This sequence belongs to the HAK/KUP transporter (TC 2.A.72) family.

The protein localises to the cell membrane. The enzyme catalyses K(+)(in) + H(+)(in) = K(+)(out) + H(+)(out). Its function is as follows. Transport of potassium into the cell. Likely operates as a K(+):H(+) symporter. This is Probable potassium transport system protein Kup from Rhodococcus jostii (strain RHA1).